A 588-amino-acid chain; its full sequence is 2-isopropylmalate synthase (588 aa).

A Pyruvate carboxyltransferase domain is found at 40 to 314; the sequence is PRWCAVDLRD…DPQIDFSDLD (275 aa). D49, H253, H255, and N289 together coordinate Mg(2+). The segment at 456–588 is regulatory domain; that stretch reads APLDRVEEKW…TVREPELAAV (133 aa).

It belongs to the alpha-IPM synthase/homocitrate synthase family. LeuA type 2 subfamily. As to quaternary structure, homodimer. Mg(2+) is required as a cofactor.

The protein resides in the cytoplasm. The enzyme catalyses 3-methyl-2-oxobutanoate + acetyl-CoA + H2O = (2S)-2-isopropylmalate + CoA + H(+). Its pathway is amino-acid biosynthesis; L-leucine biosynthesis; L-leucine from 3-methyl-2-oxobutanoate: step 1/4. Its function is as follows. Catalyzes the condensation of the acetyl group of acetyl-CoA with 3-methyl-2-oxobutanoate (2-ketoisovalerate) to form 3-carboxy-3-hydroxy-4-methylpentanoate (2-isopropylmalate). The sequence is that of 2-isopropylmalate synthase from Clavibacter michiganensis subsp. michiganensis (strain NCPPB 382).